We begin with the raw amino-acid sequence, 207 residues long: Proteasome subunit beta (207 aa).

The propeptide at 1–7 (MVEAFKG) is removed in mature form; by autocatalysis. Catalysis depends on threonine 8, which acts as the Nucleophile.

Belongs to the peptidase T1B family. In terms of assembly, the 20S proteasome core is composed of 14 alpha and 14 beta subunits that assemble into four stacked heptameric rings, resulting in a barrel-shaped structure. The two inner rings, each composed of seven catalytic beta subunits, are sandwiched by two outer rings, each composed of seven alpha subunits. The catalytic chamber with the active sites is on the inside of the barrel. Has a gated structure, the ends of the cylinder being occluded by the N-termini of the alpha-subunits. Is capped at one or both ends by the proteasome regulatory ATPase, PAN.

It localises to the cytoplasm. It carries out the reaction Cleavage of peptide bonds with very broad specificity.. The formation of the proteasomal ATPase PAN-20S proteasome complex, via the docking of the C-termini of PAN into the intersubunit pockets in the alpha-rings, triggers opening of the gate for substrate entry. Interconversion between the open-gate and close-gate conformations leads to a dynamic regulation of the 20S proteasome proteolysis activity. Its function is as follows. Component of the proteasome core, a large protease complex with broad specificity involved in protein degradation. The chain is Proteasome subunit beta from Methanothrix thermoacetophila (strain DSM 6194 / JCM 14653 / NBRC 101360 / PT) (Methanosaeta thermophila).